The chain runs to 203 residues: tRNA (pseudouridine(54)-N(1))-methyltransferase (203 aa).

The S-adenosyl-L-methionine site is built by leucine 135 and glycine 156.

The protein belongs to the methyltransferase superfamily. TrmY family. In terms of assembly, homodimer.

It is found in the cytoplasm. The enzyme catalyses pseudouridine(54) in tRNA + S-adenosyl-L-methionine = N(1)-methylpseudouridine(54) in tRNA + S-adenosyl-L-homocysteine + H(+). In terms of biological role, specifically catalyzes the N1-methylation of pseudouridine at position 54 (Psi54) in tRNAs. The sequence is that of tRNA (pseudouridine(54)-N(1))-methyltransferase from Thermococcus onnurineus (strain NA1).